Reading from the N-terminus, the 20-residue chain is Phosphoglycerate kinase (20 aa).

The interval 1 to 20 is disordered; that stretch reads MNKKSIRNVNLKGKRVFDRV.

Belongs to the phosphoglycerate kinase family. As to quaternary structure, monomer.

The protein resides in the cytoplasm. The enzyme catalyses (2R)-3-phosphoglycerate + ATP = (2R)-3-phospho-glyceroyl phosphate + ADP. The protein operates within carbohydrate degradation; glycolysis; pyruvate from D-glyceraldehyde 3-phosphate: step 2/5. The protein is Phosphoglycerate kinase of Bacillus cereus.